Reading from the N-terminus, the 266-residue chain is Coiled-coil domain-containing glutamate-rich protein 2 (266 aa).

An N-terminal signal peptide occupies residues 1 to 23; sequence MPPRGPASELLLLRLLLLGAATA. Composition is skewed to basic and acidic residues over residues 90-100, 154-188, 204-213, and 221-266; these read EAGKMRSSQEV, LWQR…EKGV, GGGERREDLP, and QPEA…RREG. The tract at residues 90-266 is disordered; that stretch reads EAGKMRSSQE…TLGEQLRREG (177 aa).

As to expression, expressed at higher levels in fetal brain and skeletal muscle. Lower expression is detected in fetal kidney, liver, spleen, thymus, heart and lung.

It localises to the secreted. In Homo sapiens (Human), this protein is Coiled-coil domain-containing glutamate-rich protein 2 (CCER2).